Reading from the N-terminus, the 206-residue chain is Putative cryptic phosphonate transport system permease protein PhnE1 (206 aa).

3 helical membrane passes run 30 to 50 (WFSL…WQGA), 92 to 112 (IAVW…LMSA), and 137 to 157 (MVFA…GVLA).

If the reading frame is restored, the complex is composed of two ATP-binding proteins (PhnC), two transmembrane proteins (PhnE) and a solute-binding protein (PhnD).

The protein localises to the cell inner membrane. In terms of biological role, N-terminal fragment of the PhnE protein, part of a phosphonate usage operon that is cryptic in K12 strains. Growth of K12 strains on phosphonate can be observed when it is used as the sole phosphorus source after a 60 hour lag period, suggesting the operon is activated. An intact PhnE in strain B is (AC A0A140NFA3). Part of the binding-protein-dependent transport system for phosphonates; probably responsible for the translocation of the substrate across the membrane. This Escherichia coli (strain K12) protein is Putative cryptic phosphonate transport system permease protein PhnE1 (phnE1).